A 195-amino-acid chain; its full sequence is Large ribosomal subunit protein bL25 (195 aa).

It belongs to the bacterial ribosomal protein bL25 family. CTC subfamily. As to quaternary structure, part of the 50S ribosomal subunit; part of the 5S rRNA/L5/L18/L25 subcomplex. Contacts the 5S rRNA. Binds to the 5S rRNA independently of L5 and L18.

Its function is as follows. This is one of the proteins that binds to the 5S RNA in the ribosome where it forms part of the central protuberance. The chain is Large ribosomal subunit protein bL25 from Geobacter metallireducens (strain ATCC 53774 / DSM 7210 / GS-15).